The primary structure comprises 175 residues: uncharacterized protein (175 aa).

The helical transmembrane segment at 143–166 threads the bilayer; sequence TCFLFCAFVTSIFIETDYSIFFLL.

The protein localises to the membrane. This is an uncharacterized protein from Saccharomyces cerevisiae (strain ATCC 204508 / S288c) (Baker's yeast).